Consider the following 543-residue polypeptide: DNA damage checkpoint protein 1 (543 aa).

The segment at K512–D543 is disordered.

The protein belongs to the DDC1 family. In terms of assembly, component of the checkpoint clamp complex composed of DDC1, MEC3 and RAD17.

It localises to the cytoplasm. The protein resides in the nucleus. In terms of biological role, component of the checkpoint clamp complex involved in the surveillance mechanism that allows the DNA repair pathways to act to restore the integrity of the DNA prior to DNA synthesis or separation of the replicated chromosomes. This Eremothecium gossypii (strain ATCC 10895 / CBS 109.51 / FGSC 9923 / NRRL Y-1056) (Yeast) protein is DNA damage checkpoint protein 1 (DDC1).